A 680-amino-acid chain; its full sequence is Leucine-rich repeat and calponin homology domain-containing protein 4 (680 aa).

Positions Met-1–Leu-22 are enriched in low complexity. The disordered stretch occupies residues Met-1 to Glu-35. LRR repeat units lie at residues Ala-41–Ser-64, Leu-67–Leu-90, Ser-92–Leu-113, Thr-114–Leu-136, Leu-138–Leu-158, Gly-159–Leu-181, Arg-182–Leu-204, Leu-206–Leu-226, and Arg-227–Gly-250. Ser-279, Ser-281, Ser-304, Ser-307, Ser-309, and Ser-313 each carry phosphoserine. The tract at residues Ser-329 to Pro-528 is disordered. Over residues Glu-330–Gly-345 the composition is skewed to basic and acidic residues. The segment covering Ala-346–Asp-355 has biased composition (acidic residues). 2 stretches are compositionally biased toward basic and acidic residues: residues Ile-357–Ala-371 and Asp-385–Gln-418. Ser-432 is subject to Phosphoserine. Composition is skewed to low complexity over residues Ala-440 to Thr-453 and Arg-510 to Pro-528. Phosphoserine is present on residues Ser-511, Ser-513, Ser-517, Ser-521, and Ser-586. The Calponin-homology (CH) domain occupies Phe-531–Gly-644. Residues Gly-655 to Thr-675 form a helical membrane-spanning segment.

Widely expressed across tissues, with the most abundant expression in spleen, testes, thymus, intestine, and blood. Expressed in macrophages.

Its subcellular location is the cell membrane. In terms of biological role, accessory protein that regulates signaling by multiple TLRs, acting as a broad-spanning regulator of the innate immune response. In macrophages, binds LPS and promotes proper docking of LPS in lipid raft membrane. May be required for lipid raft maintenance. This chain is Leucine-rich repeat and calponin homology domain-containing protein 4 (Lrch4), found in Mus musculus (Mouse).